The sequence spans 157 residues: MQLTVKALQGRECSLQVPEDELVSTLKQLVSEKLNVPVRQQRLLFKGKALADGKRLSDYSIGPNSKLNLVVKPLEKVLLEEGAGRRLADSPPTQVWQLISKVLARHFSAADASRVLEQLQRDYQRSLSRLTLDDIERLASRFLHPEVTETMEKGFSK.

Residues 1 to 76 (MQLTVKALQG…LNLVVKPLEK (76 aa)) form the Ubiquitin-like domain. Lys48 is covalently cross-linked (Glycyl lysine isopeptide (Lys-Gly) (interchain with G-Cter in ubiquitin)). At Ser90 the chain carries Phosphoserine. The tract at residues 96–138 (WQLISKVLARHFSAADASRVLEQLQRDYQRSLSRLTLDDIERL) is required and sufficient for interaction with BAG6.

In terms of assembly, component of the BAG6/BAT3 complex, at least composed of BAG6, UBL4A and GET4/TRC35. Interacts with BAG6; the interaction is direct and required for UBL4A protein stability. Interacts with USP13; may be indirect via BAG6. In terms of processing, polyubiquitinated. Ubiquitination by AMFR and deubiquitination by USP13 may regulate the interaction between the BAG6/BAT complex and SGTA and therefore may regulate client proteins fate.

The protein localises to the cytoplasm. Its subcellular location is the cytosol. It localises to the nucleus. In terms of biological role, as part of a cytosolic protein quality control complex, the BAG6/BAT3 complex, maintains misfolded and hydrophobic patches-containing proteins in a soluble state and participates in their proper delivery to the endoplasmic reticulum or alternatively can promote their sorting to the proteasome where they undergo degradation. The BAG6/BAT3 complex is involved in the post-translational delivery of tail-anchored/type II transmembrane proteins to the endoplasmic reticulum membrane. Recruited to ribosomes, it interacts with the transmembrane region of newly synthesized tail-anchored proteins and together with SGTA and ASNA1 mediates their delivery to the endoplasmic reticulum. Client proteins that cannot be properly delivered to the endoplasmic reticulum are ubiquitinated and sorted to the proteasome. Similarly, the BAG6/BAT3 complex also functions as a sorting platform for proteins of the secretory pathway that are mislocalized to the cytosol either delivering them to the proteasome for degradation or to the endoplasmic reticulum. The BAG6/BAT3 complex also plays a role in the endoplasmic reticulum-associated degradation (ERAD), a quality control mechanism that eliminates unwanted proteins of the endoplasmic reticulum through their retrotranslocation to the cytosol and their targeting to the proteasome. It maintains these retrotranslocated proteins in an unfolded yet soluble state condition in the cytosol to ensure their proper delivery to the proteasome. This is Ubiquitin-like protein 4A (UBL4A) from Plecturocebus moloch (Dusky titi monkey).